The primary structure comprises 479 residues: Sodium-coupled neutral amino acid transporter 5 (479 aa).

At 1 to 61 (MAISCAVGME…LDFEGKTSFG (61 aa)) the chain is on the cytoplasmic side. A helical transmembrane segment spans residues 62–84 (MSVFNLSNAIMGSGILGLAYAMA). The Extracellular segment spans residues 85–97 (HTGVIFFLALLLC). The helical transmembrane segment at 98–118 (IALLSSYSIHLLLTCASVVGI) threads the bilayer. Over 119–135 (RAYEQLGQRAFGPAGKV) the chain is Cytoplasmic. The chain crosses the membrane as a helical span at residues 136–156 (VVAIIICLHNVGAMSSYLFII). Topologically, residues 157-176 (KSELPLVIGTFLHMDPEGDW) are extracellular. The chain crosses the membrane as a helical span at residues 177–197 (FLKGNLLIILVSLLIILPLAL). Residues 198 to 202 (MKHLG) lie on the Cytoplasmic side of the membrane. Residues 203–223 (YLGYTSSLSLTCMLFFLISVI) form a helical membrane-spanning segment. Over 224-264 (YKKFQIGCDVSHNDTVVEAEQAPLQAFNSSCEAELFTVDSQ) the chain is Extracellular. Residues cysteine 231 and cysteine 254 are joined by a disulfide bond. Asparagine 236 carries an N-linked (GlcNAc...) asparagine glycan. The helical transmembrane segment at 265–285 (MSYTVPIMAFAFVCHPEVLPI) threads the bilayer. Over 286–302 (YTELCRPTQRRMQAVAN) the chain is Cytoplasmic. The helical transmembrane segment at 303 to 323 (MSIGAMFIMYGLTATFGYLTF) threads the bilayer. Residues 324–341 (YSTVKAEMLEMYTQEDML) lie on the Extracellular side of the membrane. A helical membrane pass occupies residues 342 to 362 (ILCVRLAVLLAVTLTVPVVLF). Over 363–383 (PIRRALQQLLFPSKAFSWLRH) the chain is Cytoplasmic. Residues 384-404 (VAIALILLILVNILVICVPTI) form a helical membrane-spanning segment. Residues 405–406 (RD) lie on the Extracellular side of the membrane. A helical membrane pass occupies residues 407 to 427 (IFGFIGSTSAPSLIFILPSVF). The Cytoplasmic portion of the chain corresponds to 428-446 (YLRIVPTEVEPLFSWPKIQ). A helical transmembrane segment spans residues 447–467 (ALCFGVLGVLFMAISLGFMFA). Over 468 to 479 (NWATGQSRMSGH) the chain is Extracellular.

This sequence belongs to the amino acid/polyamine transporter 2 family. In terms of tissue distribution, expressed in the ganglion cell layer and the nerve fiber layer (at protein level). Also expreseed in the cells of the inner nuclear layer and in the inner plexiform layer (at protein level). Expressed in Mueller and ganglion retinal cell.

It localises to the cell membrane. The catalysed reaction is L-glutamine(out) + Na(+)(out) + H(+)(in) = L-glutamine(in) + Na(+)(in) + H(+)(out). It carries out the reaction L-serine(out) + Na(+)(out) + H(+)(in) = L-serine(in) + Na(+)(in) + H(+)(out). It catalyses the reaction L-alanine(out) + Na(+)(out) + H(+)(in) = L-alanine(in) + Na(+)(in) + H(+)(out). The enzyme catalyses glycine(out) + Na(+)(out) + H(+)(in) = glycine(in) + Na(+)(in) + H(+)(out). The catalysed reaction is L-asparagine(out) + Na(+)(out) + H(+)(in) = L-asparagine(in) + Na(+)(in) + H(+)(out). It carries out the reaction L-histidine(out) + Na(+)(out) + H(+)(in) = L-histidine(in) + Na(+)(in) + H(+)(out). It catalyses the reaction L-cysteine(out) + Na(+)(out) + H(+)(in) = L-cysteine(in) + Na(+)(in) + H(+)(out). With respect to regulation, not inhibited by lithium. Partial allosteric regulation on ions sodium binding. Its function is as follows. Symporter that cotransports neutral amino acids and sodium ions, coupled to an H(+) antiporter activity. Releases L-glutamine and glycine from astroglial cells and may participate in the glutamate/GABA-L-glutamine cycle and the NMDA receptors activation. In addition, contributes significantly to L-glutamine uptake in retina, namely in ganglion and Mueller cells therefore, participates in the retinal glutamate-glutamine cycle. The transport activity is pH sensitive, Li(+) tolerant, bidirectional and associated with large uncoupled fluxes of protons. Moreover functions in both direction and is associated with large uncoupled fluxes of protons. The transport is electroneutral coupled to the cotransport of 1 Na(+) and the antiport of 1 H(+). May have a particular importance for modulation of net hepatic glutamine flux. The protein is Sodium-coupled neutral amino acid transporter 5 of Mus musculus (Mouse).